A 122-amino-acid chain; its full sequence is Riboflavin kinase (122 aa).

G4–A9 lines the CDP pocket. The Mg(2+) site is built by T33 and N35. Residues T84 and E92 each contribute to the FMN site. Residue V97 to R100 participates in CDP binding.

It belongs to the archaeal riboflavin kinase family. The cofactor is Mg(2+).

It carries out the reaction riboflavin + CTP = CDP + FMN + H(+). It functions in the pathway cofactor biosynthesis; FMN biosynthesis; FMN from riboflavin (CTP route): step 1/1. In terms of biological role, catalyzes the CTP-dependent phosphorylation of riboflavin (vitamin B2) to form flavin mononucleotide (FMN). This is Riboflavin kinase from Methanothermobacter thermautotrophicus (strain ATCC 29096 / DSM 1053 / JCM 10044 / NBRC 100330 / Delta H) (Methanobacterium thermoautotrophicum).